The following is a 291-amino-acid chain: Formamidopyrimidine-DNA glycosylase (291 aa).

The Schiff-base intermediate with DNA role is filled by Pro2. The active-site Proton donor is Glu3. The active-site Proton donor; for beta-elimination activity is Lys58. The DNA site is built by His104, Arg127, and Arg172. The segment at 257–291 (FVYDRAGLPCRACGTPIRQIVQGQRSTFCCPTCQR) adopts an FPG-type zinc-finger fold. The active-site Proton donor; for delta-elimination activity is the Arg281.

Belongs to the FPG family. As to quaternary structure, monomer. Requires Zn(2+) as cofactor.

It catalyses the reaction Hydrolysis of DNA containing ring-opened 7-methylguanine residues, releasing 2,6-diamino-4-hydroxy-5-(N-methyl)formamidopyrimidine.. The enzyme catalyses 2'-deoxyribonucleotide-(2'-deoxyribose 5'-phosphate)-2'-deoxyribonucleotide-DNA = a 3'-end 2'-deoxyribonucleotide-(2,3-dehydro-2,3-deoxyribose 5'-phosphate)-DNA + a 5'-end 5'-phospho-2'-deoxyribonucleoside-DNA + H(+). Its function is as follows. Involved in base excision repair of DNA damaged by oxidation or by mutagenic agents. Acts as a DNA glycosylase that recognizes and removes damaged bases. Has a preference for oxidized purines, such as 7,8-dihydro-8-oxoguanine (8-oxoG). Has AP (apurinic/apyrimidinic) lyase activity and introduces nicks in the DNA strand. Cleaves the DNA backbone by beta-delta elimination to generate a single-strand break at the site of the removed base with both 3'- and 5'-phosphates. This Ralstonia pickettii (strain 12J) protein is Formamidopyrimidine-DNA glycosylase.